Here is a 427-residue protein sequence, read N- to C-terminus: Glutamate-1-semialdehyde 2,1-aminomutase 1 (427 aa).

Lys-267 is modified (N6-(pyridoxal phosphate)lysine).

It belongs to the class-III pyridoxal-phosphate-dependent aminotransferase family. HemL subfamily. As to quaternary structure, homodimer. Pyridoxal 5'-phosphate serves as cofactor.

It localises to the cytoplasm. It carries out the reaction (S)-4-amino-5-oxopentanoate = 5-aminolevulinate. It functions in the pathway porphyrin-containing compound metabolism; protoporphyrin-IX biosynthesis; 5-aminolevulinate from L-glutamyl-tRNA(Glu): step 2/2. In Macrococcus caseolyticus (strain JCSC5402) (Macrococcoides caseolyticum), this protein is Glutamate-1-semialdehyde 2,1-aminomutase 1.